The chain runs to 81 residues: MNRPVHNEHRRKRFAKKCPFVSAGWKTIDYKDVTTLKRFITERGKILPRRITGVSSRFQALLAQAVKRARHVGLLPFVGED.

It belongs to the bacterial ribosomal protein bS18 family. In terms of assembly, part of the 30S ribosomal subunit. Forms a tight heterodimer with protein bS6.

Functionally, binds as a heterodimer with protein bS6 to the central domain of the 16S rRNA, where it helps stabilize the platform of the 30S subunit. The protein is Small ribosomal subunit protein bS18 of Chlamydia trachomatis serovar L2 (strain ATCC VR-902B / DSM 19102 / 434/Bu).